The sequence spans 477 residues: Sulfate adenylyltransferase subunit 1 (477 aa).

A tr-type G domain is found at 22 to 239; that stretch reads KDMLRFITCG…TVQISHDAPL (218 aa). The G1 stretch occupies residues 31–38; sequence GSVDDGKS. 31 to 38 serves as a coordination point for GTP; it reads GSVDDGKS. The interval 89–93 is G2; sequence GITID. The G3 stretch occupies residues 110-113; it reads DCPG. Residues 110-114 and 165-168 contribute to the GTP site; these read DCPGH and NKMD. Residues 165 to 168 form a G4 region; the sequence is NKMD. Positions 202 to 204 are G5; sequence SAL.

It belongs to the TRAFAC class translation factor GTPase superfamily. Classic translation factor GTPase family. CysN/NodQ subfamily. As to quaternary structure, heterodimer composed of CysD, the smaller subunit, and CysN.

It carries out the reaction sulfate + ATP + H(+) = adenosine 5'-phosphosulfate + diphosphate. It participates in sulfur metabolism; hydrogen sulfide biosynthesis; sulfite from sulfate: step 1/3. With CysD forms the ATP sulfurylase (ATPS) that catalyzes the adenylation of sulfate producing adenosine 5'-phosphosulfate (APS) and diphosphate, the first enzymatic step in sulfur assimilation pathway. APS synthesis involves the formation of a high-energy phosphoric-sulfuric acid anhydride bond driven by GTP hydrolysis by CysN coupled to ATP hydrolysis by CysD. This is Sulfate adenylyltransferase subunit 1 from Chromobacterium violaceum (strain ATCC 12472 / DSM 30191 / JCM 1249 / CCUG 213 / NBRC 12614 / NCIMB 9131 / NCTC 9757 / MK).